We begin with the raw amino-acid sequence, 877 residues long: MGNFNFLPLVSFASFVVVLVLVCAQDQSGFVSIDCGIPEDSSYYDEKTDIKYISDAAFVESGTIHSIDSKFQKKNLEKQFQKVRSFPEGKKNCYDVQPPQGKGFKYLIRTRFMYGNYDNLGKAPDFDLYLGVNLWDSVTLENSTTIVTKEIIYTLRSDKVHVCLVDKERGTPFLSVLELRLLKNNIYETASDSLMLYRRWDLGATGDLPARYKDDIFDRFWMPLMFPNFLILNTSLMIDPTSSNGFLPPSVVMSTAVAPMNSSIEQIMVYWEPRDPNWKFYIYIHFAEVEKLPSNETREFSVFLNKEQIDTTSVFRPSYLYTDTLYVQNPVSGPFLEFVLRQGVKSTRPPIMNAIETYRTNEFLDLPTDQNDVDAIMKIKTKYKVKKNWLGDPCAPFGYPWQGINCSYTANNPPRIISVNLSFSGLTGQIDPVFITLTPLQKLDLSNNRLTGTVPDFLANLPDLTELNLEENKLTGILPEKLLERSKDGSLSLRVGGNPDLCVSDSCRNKKTERKEYIIPSVASVTGLFFLLLALISFWQFKKRQQSVKTGPLDTKRYYKYSEIVEITNNFERVLGQGGFGKVYYGVLRGEQVAIKMLSKSSAQGYKEFRAEVELLLRVHHKNLIALIGYCHEGDQMALIYEYIGNGTLGDYLSGKNSSILSWEERLQISLDAAQGLEYLHNGCKPPIVHRDVKPTNILINEKLQAKIADFGLSRSFTLEGDSQVSTEVAGTIGYLDPEHYSMQQFSEKSDVYSFGVVLLEVITGQPVISRSRTEENRHISDRVSLMLSKGDIKSIVDPKLGERFNAGLAWKITEVALACASESTKTRLTMSQVVAELKESLCRARTSGDSGDISFSEPTEMNVSMTVDPGVLPQPR.

Residues 1 to 24 (MGNFNFLPLVSFASFVVVLVLVCA) form the signal peptide. At 25–517 (QDQSGFVSID…RNKKTERKEY (493 aa)) the chain is on the extracellular side. N-linked (GlcNAc...) asparagine glycosylation is found at Asn-142, Asn-233, Asn-261, Asn-295, Asn-405, and Asn-420. LRR repeat units lie at residues 439 to 462 (PLQK…ANLP) and 463 to 484 (DLTE…KLLE). Residues 518 to 538 (IIPSVASVTGLFFLLLALISF) traverse the membrane as a helical segment. Topologically, residues 539–877 (WQFKKRQQSV…VDPGVLPQPR (339 aa)) are cytoplasmic. The 274-residue stretch at 569–842 (NNFERVLGQG…QVVAELKESL (274 aa)) folds into the Protein kinase domain. Residues 575–583 (LGQGGFGKV) and Lys-596 each bind ATP. Phosphotyrosine is present on Tyr-641. Asp-692 serves as the catalytic Proton acceptor. Ser-726 carries the phosphoserine modification. A phosphothreonine mark is found at Thr-727 and Thr-732.

The protein belongs to the protein kinase superfamily. Ser/Thr protein kinase family.

It localises to the cell membrane. The catalysed reaction is L-seryl-[protein] + ATP = O-phospho-L-seryl-[protein] + ADP + H(+). The enzyme catalyses L-threonyl-[protein] + ATP = O-phospho-L-threonyl-[protein] + ADP + H(+). In Arabidopsis thaliana (Mouse-ear cress), this protein is Putative leucine-rich repeat receptor-like serine/threonine-protein kinase At2g19230.